The primary structure comprises 517 residues: Alpha,alpha-trehalose-phosphate synthase [UDP-forming] 1 (517 aa).

Tyrosine 98 and aspartate 152 together coordinate D-glucose 6-phosphate. 2 residues coordinate UDP: arginine 288 and lysine 293. The UDP-alpha-D-glucose site is built by arginine 288 and lysine 293. Arginine 326 is a D-glucose 6-phosphate binding site. Position 387–395 (387–395 (DGMNLVAYE)) interacts with UDP-alpha-D-glucose. UDP is bound at residue 391-395 (LVAYE). A disordered region spans residues 486–517 (FHAKKASFSDNNSENGEPSNGVETPAQEQVAQ). Residues 493 to 517 (FSDNNSENGEPSNGVETPAQEQVAQ) show a composition bias toward polar residues.

It belongs to the glycosyltransferase 20 family.

The enzyme catalyses D-glucose 6-phosphate + UDP-alpha-D-glucose = alpha,alpha-trehalose 6-phosphate + UDP + H(+). It participates in carbohydrate biosynthesis. Synthase catalytic subunit of the trehalose synthase complex that catalyzes the production of trehalose from glucose-6-phosphate and UDP-alpha-D-glucose in a two step process. This chain is Alpha,alpha-trehalose-phosphate synthase [UDP-forming] 1, found in Aspergillus niger.